The sequence spans 293 residues: Acetyl-coenzyme A carboxylase carboxyl transferase subunit beta (293 aa).

The CoA carboxyltransferase N-terminal domain occupies 29-293 (LWVKCPECGQ…GCKAKKAAGK (265 aa)). Residues C33, C36, C52, and C55 each coordinate Zn(2+). A C4-type zinc finger spans residues 33 to 55 (CPECGQVVYRKDLHANASVCSNC).

It belongs to the AccD/PCCB family. As to quaternary structure, acetyl-CoA carboxylase is a heterohexamer composed of biotin carboxyl carrier protein (AccB), biotin carboxylase (AccC) and two subunits each of ACCase subunit alpha (AccA) and ACCase subunit beta (AccD). Zn(2+) is required as a cofactor.

It is found in the cytoplasm. The catalysed reaction is N(6)-carboxybiotinyl-L-lysyl-[protein] + acetyl-CoA = N(6)-biotinyl-L-lysyl-[protein] + malonyl-CoA. The protein operates within lipid metabolism; malonyl-CoA biosynthesis; malonyl-CoA from acetyl-CoA: step 1/1. Functionally, component of the acetyl coenzyme A carboxylase (ACC) complex. Biotin carboxylase (BC) catalyzes the carboxylation of biotin on its carrier protein (BCCP) and then the CO(2) group is transferred by the transcarboxylase to acetyl-CoA to form malonyl-CoA. In Prochlorococcus marinus (strain MIT 9303), this protein is Acetyl-coenzyme A carboxylase carboxyl transferase subunit beta.